The primary structure comprises 390 residues: tRNA(Met) cytidine acetate ligase (390 aa).

Residues valine 7–histidine 20, glycine 101, asparagine 162, and arginine 187 each bind ATP.

The protein belongs to the TmcAL family.

It is found in the cytoplasm. The catalysed reaction is cytidine(34) in elongator tRNA(Met) + acetate + ATP = N(4)-acetylcytidine(34) in elongator tRNA(Met) + AMP + diphosphate. Catalyzes the formation of N(4)-acetylcytidine (ac(4)C) at the wobble position of elongator tRNA(Met), using acetate and ATP as substrates. First activates an acetate ion to form acetyladenylate (Ac-AMP) and then transfers the acetyl group to tRNA to form ac(4)C34. The polypeptide is tRNA(Met) cytidine acetate ligase (Listeria monocytogenes serotype 4a (strain HCC23)).